Reading from the N-terminus, the 392-residue chain is 6-aminohexanoate-dimer hydrolase (392 aa).

The segment at 1-22 (MNARSTGQHPARYPGAAAGEPT) is disordered. Serine 112 is a catalytic residue.

The catalysed reaction is [N-(6-aminohexanoyl)](n) + H2O = [N-(6-aminohexanoyl)](n-1) + 6-aminohexanoate. It carries out the reaction N-(6-aminohexanoyl)-6-aminohexanoate + H2O = 2 6-aminohexanoate. Its pathway is xenobiotic degradation; nylon-6 oligomer degradation. Involved in nylon oligomer degradation. This chain is 6-aminohexanoate-dimer hydrolase, found in Paenarthrobacter ureafaciens.